Here is a 600-residue protein sequence, read N- to C-terminus: Elongation factor 4 (600 aa).

Residues 5–187 (KYIRNFSIIA…AIVSKLPPPK (183 aa)) enclose the tr-type G domain. GTP is bound by residues 17 to 22 (DHGKST) and 134 to 137 (NKLD).

It belongs to the TRAFAC class translation factor GTPase superfamily. Classic translation factor GTPase family. LepA subfamily.

The protein localises to the cell inner membrane. It carries out the reaction GTP + H2O = GDP + phosphate + H(+). Its function is as follows. Required for accurate and efficient protein synthesis under certain stress conditions. May act as a fidelity factor of the translation reaction, by catalyzing a one-codon backward translocation of tRNAs on improperly translocated ribosomes. Back-translocation proceeds from a post-translocation (POST) complex to a pre-translocation (PRE) complex, thus giving elongation factor G a second chance to translocate the tRNAs correctly. Binds to ribosomes in a GTP-dependent manner. This is Elongation factor 4 from Rickettsia rickettsii (strain Iowa).